The following is a 144-amino-acid chain: Large ribosomal subunit protein eL27 (144 aa).

Belongs to the eukaryotic ribosomal protein eL27 family.

It is found in the cytoplasm. This is Large ribosomal subunit protein eL27 (RPL27) from Tetrahymena thermophila.